The following is a 216-amino-acid chain: Uracil-DNA glycosylase (216 aa).

The Proton acceptor role is filled by aspartate 59.

This sequence belongs to the uracil-DNA glycosylase (UDG) superfamily. UNG family.

It localises to the cytoplasm. The catalysed reaction is Hydrolyzes single-stranded DNA or mismatched double-stranded DNA and polynucleotides, releasing free uracil.. Its function is as follows. Excises uracil residues from the DNA which can arise as a result of misincorporation of dUMP residues by DNA polymerase or due to deamination of cytosine. This is Uracil-DNA glycosylase from Staphylococcus epidermidis (strain ATCC 12228 / FDA PCI 1200).